The sequence spans 691 residues: Pre-mRNA-splicing factor CLF1 (691 aa).

16 HAT repeats span residues 52-84 (EYQG…WELE), 86-118 (KEYA…AELK), 120-152 (RNIN…VEEM), 154-185 (GNIP…LEQR), 187-218 (GEYD…FEEE), 220-258 (GTSD…YEAK), 260-294 (HDLD…FEKQ), 304-336 (VVLS…LEEA), 338-372 (GDID…LWIF), 382-418 (KNPE…FEIR), 420-451 (GDLA…MEQK), 453-485 (YEFG…LERG), 487-521 (DDLD…FEEE), 523-554 (GEYD…FEIN), 574-612 (EAKA…FEKT), and 617-650 (EDIE…YIFP).

It belongs to the crooked-neck family. As to quaternary structure, associated with the spliceosome.

The protein resides in the nucleus. Its function is as follows. Involved in pre-mRNA splicing and cell cycle progression. Required for the spliceosome assembly and initiation of the DNA replication. This Pyricularia oryzae (strain 70-15 / ATCC MYA-4617 / FGSC 8958) (Rice blast fungus) protein is Pre-mRNA-splicing factor CLF1 (CLF1).